Here is a 265-residue protein sequence, read N- to C-terminus: MKENIGDCTIDLTVTSPPYDDLRNYNGYSFNFEETAQELYRVTKEGGVVVWVVGDKTHKGSETGSSFRQALYFKELGFNLHDTMIYEKDSISFPDKNRYYQIFEYMFIFSKGKPKTINLLADRKNKWYNGKKHIKGHYRKMDGEKVRHHKQNLLKEFGVRFNIWRIPNGHQKSTLDKIAFQHPAIFPEKLAEDHILSWSNEGDIVFDPFMGSGTTAKMAALNNRKYIGTEISKEYCDIANERLKNYIILHKRMEGKGYRLPQVHS.

Belongs to the N(4)/N(6)-methyltransferase family. N(4) subfamily.

It carries out the reaction a 2'-deoxycytidine in DNA + S-adenosyl-L-methionine = an N(4)-methyl-2'-deoxycytidine in DNA + S-adenosyl-L-homocysteine + H(+). A beta subtype methylase, recognizes the double-stranded sequence 5'-GGATCC-3', methylates C-? on both strands. No endonuclease has been identified for this methylase, although it is speculated it might protect against BamHI. This is Orphan methyltransferase M.BamHII (bamHIIM) from Bacillus amyloliquefaciens (Bacillus velezensis).